A 97-amino-acid polypeptide reads, in one-letter code: Co-chaperonin GroES (97 aa).

The protein belongs to the GroES chaperonin family. Heptamer of 7 subunits arranged in a ring. Interacts with the chaperonin GroEL.

It localises to the cytoplasm. Together with the chaperonin GroEL, plays an essential role in assisting protein folding. The GroEL-GroES system forms a nano-cage that allows encapsulation of the non-native substrate proteins and provides a physical environment optimized to promote and accelerate protein folding. GroES binds to the apical surface of the GroEL ring, thereby capping the opening of the GroEL channel. The chain is Co-chaperonin GroES from Pseudomonas putida (Arthrobacter siderocapsulatus).